An 814-amino-acid chain; its full sequence is Rho GTPase-activating protein 26 (814 aa).

The region spanning 7–262 (EFSDCCLDSP…MKENPLEHKT (256 aa)) is the BAR domain. Residues 265-369 (PYTMEGYLYV…WMEAMDGREP (105 aa)) enclose the PH domain. Positions 383–568 (AQLDSIGFSI…ILIENHEKIF (186 aa)) constitute a Rho-GAP domain. Disordered regions lie at residues 584–618 (SRKKSSDSKPPSCSKRPLTLFHAVPSTEKQEQRNS) and 638–696 (SSSL…SSDS). Low complexity-rich tracts occupy residues 591–600 (SKPPSCSKRP) and 638–661 (SSSLQPNLNSSDSNLDVVKPSRPS). The span at 662–672 (SLPPNPSPTSP) shows a compositional bias: pro residues. Residue serine 668 is modified to Phosphoserine. At threonine 670 the chain carries Phosphothreonine. Serine 671 is modified (phosphoserine). Residues 673-696 (LSPSWPMFSAPSSPMPTSSTSSDS) show a composition bias toward low complexity. The SH3 domain maps to 756 to 814 (TPFRKAKALYACQAEHDSELSFTAGTVFDNVHPSQEPGWLEGTLNGKTGLIPENYVEFL).

In terms of assembly, interacts with NYAP1, NYAP2 and MYO16. Interacts with MICAL1 and WDR44. Binds to the C-terminus of PTK2/FAK1. Post-translationally, phosphorylated in a PINK1-dependent fashion promoting retrograde mitochondrial trafficking and clustering.

It localises to the cell junction. The protein resides in the focal adhesion. It is found in the cytoplasm. Its subcellular location is the cytoskeleton. The protein localises to the endosome membrane. In terms of biological role, GTPase-activating protein for RHOA and CDC42. Facilitates mitochondrial quality control by promoting Parkin-mediated recruitment of autophagosomes to damaged mitochondria. Associates with MICAL1 on the endosomal membrane to promote Rab8-Rab10-dependent tubule extension. After dissociation of MICAL1, recruits WDR44 which connects the endoplasmic reticulum (ER) with the endosomal tubule, thereby participating in the export of a subset of neosynthesized proteins. In Mus musculus (Mouse), this protein is Rho GTPase-activating protein 26 (Arhgap26).